The following is a 305-amino-acid chain: uncharacterized protein (305 aa).

This is an uncharacterized protein from Streptomyces griseus.